Here is a 97-residue protein sequence, read N- to C-terminus: Large ribosomal subunit protein bL27 (97 aa).

The disordered stretch occupies residues 14–36 (HKKGGGSTSNGRDSQAKRLGAKA).

Belongs to the bacterial ribosomal protein bL27 family.

This is Large ribosomal subunit protein bL27 from Streptococcus sanguinis (strain SK36).